Consider the following 170-residue polypeptide: Peptide deformylase (170 aa).

Residues C91 and H133 each contribute to the Fe cation site. E134 is a catalytic residue. A Fe cation-binding site is contributed by H137.

It belongs to the polypeptide deformylase family. Fe(2+) serves as cofactor.

The enzyme catalyses N-terminal N-formyl-L-methionyl-[peptide] + H2O = N-terminal L-methionyl-[peptide] + formate. Removes the formyl group from the N-terminal Met of newly synthesized proteins. Requires at least a dipeptide for an efficient rate of reaction. N-terminal L-methionine is a prerequisite for activity but the enzyme has broad specificity at other positions. The chain is Peptide deformylase from Aliivibrio fischeri (strain ATCC 700601 / ES114) (Vibrio fischeri).